The following is a 121-amino-acid chain: Small ribosomal subunit protein bS6 (121 aa).

The protein belongs to the bacterial ribosomal protein bS6 family.

Its function is as follows. Binds together with bS18 to 16S ribosomal RNA. The chain is Small ribosomal subunit protein bS6 from Rickettsia felis (strain ATCC VR-1525 / URRWXCal2) (Rickettsia azadi).